The chain runs to 392 residues: uncharacterized protein (392 aa).

This is an uncharacterized protein from Encephalitozoon cuniculi (strain GB-M1) (Microsporidian parasite).